The sequence spans 823 residues: DNA ligase (823 aa).

NAD(+) is bound by residues 32–36 (DAEYD), 81–82 (SL), and glutamate 121. Lysine 123 acts as the N6-AMP-lysine intermediate in catalysis. NAD(+) is bound by residues arginine 144, glutamate 181, lysine 299, and lysine 323. The Zn(2+) site is built by cysteine 449, cysteine 452, cysteine 467, and cysteine 473. The interval 528-558 (ETADKGSSENENGDAETVSGDLSKYNTQNGK) is disordered. A BRCT domain is found at 746-823 (GINKAVAGKT…SEAELLTLLC (78 aa)).

Belongs to the NAD-dependent DNA ligase family. LigA subfamily. Mg(2+) is required as a cofactor. The cofactor is Mn(2+).

It carries out the reaction NAD(+) + (deoxyribonucleotide)n-3'-hydroxyl + 5'-phospho-(deoxyribonucleotide)m = (deoxyribonucleotide)n+m + AMP + beta-nicotinamide D-nucleotide.. Functionally, DNA ligase that catalyzes the formation of phosphodiester linkages between 5'-phosphoryl and 3'-hydroxyl groups in double-stranded DNA using NAD as a coenzyme and as the energy source for the reaction. It is essential for DNA replication and repair of damaged DNA. In Neisseria gonorrhoeae (strain NCCP11945), this protein is DNA ligase.